The sequence spans 349 residues: 11-beta-hydroxysteroid dehydrogenase 1A (349 aa).

The chain crosses the membrane as a helical; Signal-anchor for type II membrane protein span at residues 10–30 (LTAPFFTFFGLCFFLPPFYFF). NADP(+)-binding positions include 54-80 (GASSGIGEQLAYEYACRGACLALTARR) and aspartate 105. Residue serine 184 participates in substrate binding. Tyrosine 197 serves as the catalytic Proton acceptor. NADP(+)-binding positions include 197-201 (YNASK) and lysine 201.

This sequence belongs to the short-chain dehydrogenases/reductases (SDR) family. In terms of tissue distribution, expressed in the above-ground part of seedlings, especially in the vascular tissues. Also detected in the buds and silique pedicels. Highly induced in oil-accumulating tissues of maturing seeds.

The protein resides in the lipid droplet. It localises to the membrane. The enzyme catalyses an 11beta-hydroxysteroid + NADP(+) = an 11-oxosteroid + NADPH + H(+). It catalyses the reaction 17beta-estradiol + NADP(+) = estrone + NADPH + H(+). It carries out the reaction corticosterone + NADP(+) = 11-dehydrocorticosterone + NADPH + H(+). The catalysed reaction is cortisone + NADPH + H(+) = cortisol + NADP(+). In terms of biological role, catalyzes 11-beta, 17-beta-hydroxysteroid and reduces 17-beta-ketosteroids. Involved in regulating plant growth and development, probably promoting or mediating brassinosteroid effects. Plays a role during seed maturation. The polypeptide is 11-beta-hydroxysteroid dehydrogenase 1A (HSD1) (Arabidopsis thaliana (Mouse-ear cress)).